The primary structure comprises 809 residues: Glycerol-3-phosphate acyltransferase (809 aa).

The short motif at 306–311 (HRSHMD) is the HXXXXD motif element.

The protein belongs to the GPAT/DAPAT family.

It localises to the cell inner membrane. It carries out the reaction sn-glycerol 3-phosphate + an acyl-CoA = a 1-acyl-sn-glycero-3-phosphate + CoA. The protein operates within phospholipid metabolism; CDP-diacylglycerol biosynthesis; CDP-diacylglycerol from sn-glycerol 3-phosphate: step 1/3. In Vibrio vulnificus (strain YJ016), this protein is Glycerol-3-phosphate acyltransferase.